The following is a 260-amino-acid chain: Indole-3-glycerol phosphate synthase (260 aa).

This sequence belongs to the TrpC family.

The enzyme catalyses 1-(2-carboxyphenylamino)-1-deoxy-D-ribulose 5-phosphate + H(+) = (1S,2R)-1-C-(indol-3-yl)glycerol 3-phosphate + CO2 + H2O. It functions in the pathway amino-acid biosynthesis; L-tryptophan biosynthesis; L-tryptophan from chorismate: step 4/5. This is Indole-3-glycerol phosphate synthase from Staphylococcus saprophyticus subsp. saprophyticus (strain ATCC 15305 / DSM 20229 / NCIMB 8711 / NCTC 7292 / S-41).